A 307-amino-acid chain; its full sequence is Synaptophysin (307 aa).

Residues 1-19 lie on the Cytoplasmic side of the membrane; sequence MDVVNQLVAGGQFRVVKEP. The 208-residue stretch at 15–222 folds into the MARVEL domain; the sequence is VVKEPLGFVK…NLWFVFKETG (208 aa). A helical transmembrane segment spans residues 20–43; it reads LGFVKVLQWVFAIFAFATCGSYTG. Residues 44–101 lie on the Vesicular side of the membrane; sequence ELRLSVECANKTESALNIEVEFEYPFRLHQVYFDAPSCVKGGTTKIFLVGDYSSSAEF. An N-linked (GlcNAc...) asparagine glycan is attached at asparagine 53. Tyrosine 75 is subject to Phosphotyrosine. Residues 102 to 125 form a helical membrane-spanning segment; it reads FVTVAVFAFLYSMGALATYIFLQN. Residues 126 to 132 lie on the Cytoplasmic side of the membrane; the sequence is KYRENNK. A helical membrane pass occupies residues 133–156; that stretch reads GPMMDFLATAVFAFMWLVSSSAWA. Over 157–194 the chain is Vesicular; it reads KGLSDVKMATDPENIIKEMPMCRQTGNTCKELRDPVTS. The chain crosses the membrane as a helical span at residues 195 to 218; that stretch reads GLNTSVVFGFLNLVLWVGNLWFVF. The Cytoplasmic segment spans residues 219–307; it reads KETGWAAPFM…GAPTSFSNQM (89 aa). Residue threonine 221 is modified to Phosphothreonine. The interval 233–307 is disordered; that stretch reads GAPEKQPAPG…GAPTSFSNQM (75 aa). Positions 248 to 258 are enriched in gly residues; it reads AGYGQGPGGYG. The tract at residues 249 to 298 is repeats, Gly-rich; sequence GYGQGPGGYGPQDSYGPQGGYQPDYGQPASGGGGYGPQGDYGQQGYGQQG. Residues 259 to 276 show a composition bias toward low complexity; that stretch reads PQDSYGPQGGYQPDYGQP. Phosphotyrosine occurs at positions 273 and 289. Residues 277–296 show a composition bias toward gly residues; that stretch reads ASGGGGYGPQGDYGQQGYGQ.

Belongs to the synaptophysin/synaptobrevin family. Homohexamer or homotetramer. Interacts with SRCIN1. Interacts with VAMP2; the interaction is inhibited by interaction of VAPM2 with SEPT8. In terms of processing, ubiquitinated; mediated by SIAH1 or SIAH2 and leading to its subsequent proteasomal degradation. Phosphorylated by SRC. In terms of tissue distribution, expressed in the brain with expression in the cerebrum and the cerebellum.

The protein resides in the cytoplasmic vesicle. It is found in the secretory vesicle. It localises to the synaptic vesicle membrane. The protein localises to the synapse. Its subcellular location is the synaptosome. Possibly involved in structural functions as organizing other membrane components or in targeting the vesicles to the plasma membrane. Involved in the regulation of short-term and long-term synaptic plasticity. The polypeptide is Synaptophysin (Syp) (Rattus norvegicus (Rat)).